Consider the following 61-residue polypeptide: Short neurotoxin 1 (61 aa).

Positions 1-16 (LECHNQQSSQPPTTKS) are enriched in polar residues. A disordered region spans residues 1-20 (LECHNQQSSQPPTTKSCPGD). Intrachain disulfides connect Cys-3-Cys-23, Cys-17-Cys-40, Cys-42-Cys-53, and Cys-54-Cys-59.

This sequence belongs to the three-finger toxin family. Short-chain subfamily. Type I alpha-neurotoxin sub-subfamily. In terms of tissue distribution, expressed by the venom gland.

The protein resides in the secreted. Binds to muscle nicotinic acetylcholine receptor (nAChR) and inhibit acetylcholine from binding to the receptor, thereby impairing neuromuscular transmission. This is Short neurotoxin 1 from Hemachatus haemachatus (Rinkhals).